The chain runs to 21 residues: Nigrocin-2JDa (21 aa).

C15 and C21 are joined by a disulfide.

As to expression, expressed by the skin glands.

It localises to the secreted. Functionally, has antibacterial activity against E.coli ATCC 25992 (MIC=16 uM), E.coli CIB 84492 (MIC=16 uM), S.aureus ATCC 25923 (MIC=16 uM) and S.aureus CIB 85462 (MIC=8 uM). Has antifungal activity against C.albicans (MIC=63 uM). Has hemolytic activity against rabbit erythrocytes. This Odorrana jingdongensis (Jingdong frog) protein is Nigrocin-2JDa.